The sequence spans 376 residues: Putative aryl-alcohol dehydrogenase AAD14 (376 aa).

Residue Tyr76 is the Proton donor of the active site. His151 lines the substrate pocket. 236–246 contributes to the NADP(+) binding site; that stretch reads DVMGGGRFQSK.

It belongs to the aldo/keto reductase family. Aldo/keto reductase 2 subfamily.

The protein is Putative aryl-alcohol dehydrogenase AAD14 (AAD14) of Saccharomyces cerevisiae (strain ATCC 204508 / S288c) (Baker's yeast).